The following is a 161-amino-acid chain: Zinc finger A20 and AN1 domain-containing stress-associated protein 9 (161 aa).

Residues 17–51 form an A20-type zinc finger; sequence PEAPILCVNNCGFFGSSMTNNMCSKCYRDFVKVTT. Zn(2+) is bound by residues Cys-23, Cys-27, Cys-39, and Cys-42. The segment at 62-99 is disordered; sequence FTPASSSKTPLEPAKPDEVPAAAVEDKQAAQEPPKPPS. Positions 75-90 are enriched in basic and acidic residues; it reads AKPDEVPAAAVEDKQA. The AN1-type zinc-finger motif lies at 96-142; it reads KPPSNRCLSCRKKVGLTGFQCRCGGTFCSTHRYTEAHDCTFDYKKAG. Positions 102, 105, 116, 118, 123, 126, 132, and 134 each coordinate Zn(2+).

Its function is as follows. May be involved in environmental stress response. The chain is Zinc finger A20 and AN1 domain-containing stress-associated protein 9 (SAP9) from Oryza sativa subsp. japonica (Rice).